The chain runs to 357 residues: uncharacterized protein (357 aa).

Positions 27 to 242 (HFGNTVTFER…VSSVRLNFPK (216 aa)) constitute a Radical SAM core domain. [4Fe-4S] cluster-binding residues include C44, C50, and C53.

It depends on [4Fe-4S] cluster as a cofactor.

This is an uncharacterized protein from Methanocaldococcus jannaschii (strain ATCC 43067 / DSM 2661 / JAL-1 / JCM 10045 / NBRC 100440) (Methanococcus jannaschii).